The following is a 127-amino-acid chain: Fluoride-specific ion channel FluC (127 aa).

A run of 4 helical transmembrane segments spans residues 4–24 (SILA…FLGL), 36–56 (GTLL…AYFA), 68–88 (LIIT…AEVV), and 99–119 (AAGA…LGLF). Residues glycine 75 and threonine 78 each coordinate Na(+).

This sequence belongs to the fluoride channel Fluc/FEX (TC 1.A.43) family.

The protein resides in the cell inner membrane. The enzyme catalyses fluoride(in) = fluoride(out). With respect to regulation, na(+) is not transported, but it plays an essential structural role and its presence is essential for fluoride channel function. In terms of biological role, fluoride-specific ion channel. Important for reducing fluoride concentration in the cell, thus reducing its toxicity. The polypeptide is Fluoride-specific ion channel FluC (Pseudomonas aeruginosa (strain UCBPP-PA14)).